The sequence spans 137 residues: 14 kDa proline-rich protein DC2.15 (137 aa).

The first 25 residues, 1–25, serve as a signal peptide directing secretion; the sequence is MGSKNSASVALFFTLNILFFALVSS. The disordered stretch occupies residues 30 to 53; it reads PDPYKPKPKPTPKPTPTPYPSAGK. A compositionally biased stretch (pro residues) spans 38–48; sequence KPTPKPTPTPY. A helical membrane pass occupies residues 88-104; sequence LEGLVNLEAAVCLCTAI.

It localises to the membrane. May be connected with the initiation of embryogenesis or with the metabolic changes produced by the removal of auxins. The polypeptide is 14 kDa proline-rich protein DC2.15 (Daucus carota (Wild carrot)).